The following is a 130-amino-acid chain: Keratin-associated protein 12-1 (130 aa).

Tandem repeats lie at residues 10–14, 15–29, 34–38, 40–44, 45–49, 60–64, 85–89, 90–94, 95–99, 104–108, 109–113, 114–118, 119–123, and 124–128. The interval 10-128 is 14 X 5 AA approximate repeats; sequence CQPSCCVSSS…CKPVTCSNPS (119 aa).

This sequence belongs to the KRTAP type 12 family. In terms of assembly, interacts with hair keratins. As to expression, expressed only in the head and back skin of a 3 day old mouse. Not expressed in adult skin.

In terms of biological role, in the hair cortex, hair keratin intermediate filaments are embedded in an interfilamentous matrix, consisting of hair keratin-associated proteins (KRTAP), which are essential for the formation of a rigid and resistant hair shaft through their extensive disulfide bond cross-linking with abundant cysteine residues of hair keratins. The matrix proteins include the high-sulfur and high-glycine-tyrosine keratins. This Mus musculus (Mouse) protein is Keratin-associated protein 12-1.